Here is a 464-residue protein sequence, read N- to C-terminus: ATP synthase subunit beta (464 aa).

154–161 (GGAGVGKT) provides a ligand contact to ATP.

This sequence belongs to the ATPase alpha/beta chains family. As to quaternary structure, F-type ATPases have 2 components, CF(1) - the catalytic core - and CF(0) - the membrane proton channel. CF(1) has five subunits: alpha(3), beta(3), gamma(1), delta(1), epsilon(1). CF(0) has three main subunits: a(1), b(2) and c(9-12). The alpha and beta chains form an alternating ring which encloses part of the gamma chain. CF(1) is attached to CF(0) by a central stalk formed by the gamma and epsilon chains, while a peripheral stalk is formed by the delta and b chains.

It is found in the cell membrane. It catalyses the reaction ATP + H2O + 4 H(+)(in) = ADP + phosphate + 5 H(+)(out). Its function is as follows. Produces ATP from ADP in the presence of a proton gradient across the membrane. The catalytic sites are hosted primarily by the beta subunits. In Mycoplasmopsis synoviae (strain 53) (Mycoplasma synoviae), this protein is ATP synthase subunit beta.